The following is a 148-amino-acid chain: uncharacterized protein (148 aa).

Positions 1–18 (MKIILTVLAGVGLLSAGG) are cleaved as a signal peptide. Cys-19 carries N-palmitoyl cysteine lipidation. A lipid anchor (S-diacylglycerol cysteine) is attached at Cys-19.

Its subcellular location is the cell membrane. This is an uncharacterized protein from Bacillus subtilis (strain 168).